A 928-amino-acid polypeptide reads, in one-letter code: Protein NETWORKED 2B (928 aa).

The region spanning 10 to 90 (YSWWWASHIR…ERYDHLSTEL (81 aa)) is the NAB domain. The disordered stretch occupies residues 108-144 (PLVDDDDDDDDDNPKKPPKHLHLIPSGTNIPQVPEVP). Residues 110 to 119 (VDDDDDDDDD) are compositionally biased toward acidic residues. Coiled coils occupy residues 207-309 (SYEQ…AKKA) and 360-445 (ALLK…VKMD). Disordered regions lie at residues 447–472 (DVEGDGLNPEDIQEEDTVEDSDSISN) and 489–529 (KQSR…EERR). Acidic residues predominate over residues 457–468 (DIQEEDTVEDSD). Positions 489 to 506 (KQSRDQESMQEEKSETRD) are enriched in basic and acidic residues. Residues 547–574 (LLDEYSSVLRDYREVKRKLSEVEKKNRD) are a coiled coil. A disordered region spans residues 620–651 (AESVSISHSSNSSFSMPPLPQRGDLKRASEQE). Residues 622–634 (SVSISHSSNSSFS) show a composition bias toward low complexity. Residues 642 to 651 (GDLKRASEQE) are compositionally biased toward basic and acidic residues.

The protein belongs to the NET family.

Plant-specific actin binding protein. May be part of a membrane-cytoskeletal adapter complex. This is Protein NETWORKED 2B from Arabidopsis thaliana (Mouse-ear cress).